We begin with the raw amino-acid sequence, 91 residues long: MANTAQARKRVLQNEKRRLHNASLRSRLRTYVKGVLKAVHVGDQEQARSALRAAESVIDKTVGKGVAHRNMAARTKSRLSARVKAMGNAAQ.

This sequence belongs to the bacterial ribosomal protein bS20 family.

In terms of biological role, binds directly to 16S ribosomal RNA. The polypeptide is Small ribosomal subunit protein bS20 (Acidithiobacillus ferrooxidans (strain ATCC 23270 / DSM 14882 / CIP 104768 / NCIMB 8455) (Ferrobacillus ferrooxidans (strain ATCC 23270))).